A 218-amino-acid polypeptide reads, in one-letter code: Pyridoxine/pyridoxamine 5'-phosphate oxidase (218 aa).

Substrate-binding positions include 14–17 (RREY) and lysine 72. Residues 67 to 72 (RIVLLK), 82 to 83 (YT), arginine 88, lysine 89, and glutamine 111 contribute to the FMN site. 3 residues coordinate substrate: tyrosine 129, arginine 133, and serine 137. Residues 146–147 (QS) and tryptophan 191 each bind FMN. 197-199 (RLH) provides a ligand contact to substrate. Residue arginine 201 coordinates FMN.

It belongs to the pyridoxamine 5'-phosphate oxidase family. Homodimer. It depends on FMN as a cofactor.

It carries out the reaction pyridoxamine 5'-phosphate + O2 + H2O = pyridoxal 5'-phosphate + H2O2 + NH4(+). The enzyme catalyses pyridoxine 5'-phosphate + O2 = pyridoxal 5'-phosphate + H2O2. The protein operates within cofactor metabolism; pyridoxal 5'-phosphate salvage; pyridoxal 5'-phosphate from pyridoxamine 5'-phosphate: step 1/1. It functions in the pathway cofactor metabolism; pyridoxal 5'-phosphate salvage; pyridoxal 5'-phosphate from pyridoxine 5'-phosphate: step 1/1. In terms of biological role, catalyzes the oxidation of either pyridoxine 5'-phosphate (PNP) or pyridoxamine 5'-phosphate (PMP) into pyridoxal 5'-phosphate (PLP). This Escherichia coli (strain SMS-3-5 / SECEC) protein is Pyridoxine/pyridoxamine 5'-phosphate oxidase.